Here is a 230-residue protein sequence, read N- to C-terminus: Demethylmenaquinone methyltransferase (230 aa).

S-adenosyl-L-methionine is bound by residues Thr57, Asp77, 101–102 (DI), and Ser118.

This sequence belongs to the class I-like SAM-binding methyltransferase superfamily. MenG/UbiE family.

It catalyses the reaction a 2-demethylmenaquinol + S-adenosyl-L-methionine = a menaquinol + S-adenosyl-L-homocysteine + H(+). It participates in quinol/quinone metabolism; menaquinone biosynthesis; menaquinol from 1,4-dihydroxy-2-naphthoate: step 2/2. Its function is as follows. Methyltransferase required for the conversion of demethylmenaquinol (DMKH2) to menaquinol (MKH2). The sequence is that of Demethylmenaquinone methyltransferase from Chlamydia caviae (strain ATCC VR-813 / DSM 19441 / 03DC25 / GPIC) (Chlamydophila caviae).